Consider the following 291-residue polypeptide: Nucleotide-binding protein lin2617 (291 aa).

13–20 (GMSGAGKT) contacts ATP. Residue 63–66 (DLRG) coordinates GTP.

It belongs to the RapZ-like family.

Functionally, displays ATPase and GTPase activities. The protein is Nucleotide-binding protein lin2617 of Listeria innocua serovar 6a (strain ATCC BAA-680 / CLIP 11262).